Here is a 249-residue protein sequence, read N- to C-terminus: uncharacterized protein (249 aa).

Belongs to the chlamydial CPn_0206/CT203/TC_0475 family.

This is an uncharacterized protein from Chlamydia muridarum (strain MoPn / Nigg).